Here is a 1254-residue protein sequence, read N- to C-terminus: Structural polyprotein (1254 aa).

The tract at residues 43–77 (LQAQQMQQLISAVSALTTKQNVKAPKGQRQKKQQK) is host transcription inhibition. The interval 60–113 (TKQNVKAPKGQRQKKQQKPKEKKENQKKKPTQKKKQQQKPKPQAKKKKPGRRER) is disordered. The Nuclear localization signal signature appears at 70–108 (QRQKKQQKPKEKKENQKKKPTQKKKQQQKPKPQAKKKKP). A compositionally biased stretch (basic residues) spans 84-110 (NQKKKPTQKKKQQQKPKPQAKKKKPGR). The tract at residues 95–123 (QQQKPKPQAKKKKPGRRERMCMKIENDCI) is binding to the viral RNA. The tract at residues 108–122 (PGRRERMCMKIENDC) is ribosome-binding. Cysteine 122 and cysteine 137 are disulfide-bonded. Residues 122–270 (CIFEVKLDGK…RVTPEGTEEW (149 aa)) enclose the Peptidase S3 domain. Catalysis depends on histidine 148, which acts as the Charge relay system. The Nuclear export signal motif lies at 153-163 (IDNPDLAKLTY). The interaction with spike glycoprotein E2 stretch occupies residues 164-169 (KKSSKY). Aspartate 170 (charge relay system) is an active-site residue. The tract at residues 192 to 202 (PEGHYNWHHGA) is dimerization of the capsid protein. Serine 222 functions as the Charge relay system in the catalytic mechanism. The interval 228–232 (DNKGR) is dimerization of the capsid protein. The functions as an uncleaved signal peptide for the precursor of protein E3/E2 stretch occupies residues 271-282 (SAALMMCILANT). The Extracellular segment spans residues 271–694 (SAALMMCILA…PHEIIQYYYG (424 aa)). 3 cysteine pairs are disulfide-bonded: cysteine 277–cysteine 286, cysteine 291–cysteine 295, and cysteine 294–cysteine 326. Asparagine 281 carries N-linked (GlcNAc...) asparagine; by host glycosylation. A glycan (N-linked (GlcNAc...) asparagine; by host) is linked at asparagine 328. 6 disulfide bridges follow: cysteine 353/cysteine 459, cysteine 356/cysteine 362, cysteine 425/cysteine 439, cysteine 487/cysteine 599, cysteine 535/cysteine 559, and cysteine 537/cysteine 554. Interaction with host Mxra8 receptor stretches follow at residues 360 to 363 (YFCY) and 396 to 398 (HAH). Residues 518–521 (TAGN) form an interaction with host Mxra8 receptor region. Asparagine 534 is a glycosylation site (N-linked (GlcNAc...) asparagine; by host). The tract at residues 550 to 556 (TINTCKI) is interaction with host Mxra8 receptor. Asparagine 596 carries N-linked (GlcNAc...) asparagine; by host glycosylation. A helical transmembrane segment spans residues 695 to 715 (LYPAATIAAVSGASLMALLTL). Over 716–756 (AATCCMLATARRKCLTPYALTPGAVVPLTLGLLCCAPRANA) the chain is Cytoplasmic. Cysteine 719 carries the S-palmitoyl cysteine; by host lipid modification. Residues 724–728 (TARRK) form an interaction with the capsid protein region. 3 S-palmitoyl cysteine; by host lipidation sites follow: cysteine 729, cysteine 749, and cysteine 750. The transient transmembrane before p62-6K protein processing stretch occupies residues 729 to 749 (CLTPYALTPGAVVPLTLGLLC). Residues cysteine 729 and cysteine 750 are joined by a disulfide bond. Topologically, residues 757-771 (ASFAETMAYLWDENK) are extracellular. A helical membrane pass occupies residues 772-792 (TLFWMEFAAPAAALALLACCI). A topological domain (cytoplasmic) is located at residue lysine 793. Residues 794 to 814 (SLICCCKPFSFLVLLSLGASA) form a helical membrane-spanning segment. Topologically, residues 815–1231 (KAYEHTATIP…AMTWVQRLAS (417 aa)) are extracellular. Cystine bridges form between cysteine 865–cysteine 930, cysteine 878–cysteine 910, cysteine 879–cysteine 912, and cysteine 884–cysteine 894. The interval 900–917 (VYPFMWGGAYCFCDSENT) is E1 fusion peptide loop. A glycan (N-linked (GlcNAc...) asparagine; by host) is linked at asparagine 957. 4 disulfides stabilise this stretch: cysteine 1075-cysteine 1087, cysteine 1117-cysteine 1192, cysteine 1122-cysteine 1196, and cysteine 1144-cysteine 1186. A helical transmembrane segment spans residues 1232-1252 (GLGGLALIAVVVLVLVTCITM). Residue cysteine 1249 is the site of S-palmitoyl cysteine; by host attachment. Cysteine 1249 carries the S-stearoyl cysteine; by host lipid modification. Residues 1253–1254 (RR) lie on the Cytoplasmic side of the membrane.

In terms of assembly, homodimer. Homomultimer. Interacts with host karyopherin KPNA4; this interaction allows the nuclear import of the viral capsid protein. Interacts with spike glycoprotein E2. Interacts with host IRAK1; the interaction leads to inhibition of IRAK1-dependent signaling. As to quaternary structure, the precursor of protein E3/E2 and E1 form a heterodimer shortly after synthesis. Interacts with spike glycoprotein E2. The precursor of protein E3/E2 and E1 form a heterodimer shortly after synthesis. Processing of the precursor of protein E3/E2 into E2 and E3 results in a heterodimer of the spike glycoproteins E2 and E1. Spike at virion surface are constituted of a trimer of E2-E1 heterodimers. After target cell attachment and endocytosis, E1 change conformation to form homotrimers. Interacts with 6K protein. E1/E2 heterodimer interacts with host LDLR. In terms of assembly, interacts with spike glycoprotein E1. Processing of the precursor of protein E3/E2 into E2 and E3 results in a heterodimer of the spike glycoproteins E2 and E1. Spike at virion surface are constituted of a trimer of E2-E1 heterodimers. Interacts with 6K protein. Interacts with host MXRA8; this interaction mediates virus entry. As to quaternary structure, oligomer. Interacts with spike glycoprotein E1. Interacts with spike glycoprotein E2. Structural polyprotein: Specific enzymatic cleavages in vivo yield mature proteins. Capsid protein is auto-cleaved during polyprotein translation, unmasking a signal peptide at the N-terminus of the precursor of E3/E2. The remaining polyprotein is then targeted to the host endoplasmic reticulum, where host signal peptidase cleaves it into pE2, 6K and E1 proteins. pE2 is further processed to mature E3 and E2 by host furin in trans-Golgi vesicle. Post-translationally, palmitoylated via thioester bonds. These palmitoylations may induce disruption of the C-terminus transmembrane. This would result in the reorientation of E2 C-terminus from lumenal to cytoplasmic side. In terms of processing, N-glycosylated. Palmitoylated via thioester bonds.

The protein localises to the virion. It is found in the host cytoplasm. It localises to the host cell membrane. Its subcellular location is the host nucleus. The protein resides in the virion membrane. The protein localises to the host Golgi apparatus. It is found in the host trans-Golgi network. It localises to the host endoplasmic reticulum. The catalysed reaction is Autocatalytic release of the core protein from the N-terminus of the togavirus structural polyprotein by hydrolysis of a -Trp-|-Ser- bond.. Its function is as follows. Forms an icosahedral capsid with a T=4 symmetry composed of 240 copies of the capsid protein surrounded by a lipid membrane through which penetrate 80 spikes composed of trimers of E1-E2 heterodimers. The capsid protein binds to the viral RNA genome at a site adjacent to a ribosome binding site for viral genome translation following genome release. Possesses a protease activity that results in its autocatalytic cleavage from the nascent structural protein. Following its self-cleavage, the capsid protein transiently associates with ribosomes, and within several minutes the protein binds to viral RNA and rapidly assembles into icosahedric core particles. The resulting nucleocapsid eventually associates with the cytoplasmic domain of the spike glycoprotein E2 at the cell membrane, leading to budding and formation of mature virions. In case of infection, new virions attach to target cells and after clathrin-mediated endocytosis their membrane fuses with the host endosomal membrane. This leads to the release of the nucleocapsid into the cytoplasm, followed by an uncoating event necessary for the genomic RNA to become accessible. The uncoating might be triggered by the interaction of capsid proteins with ribosomes. Binding of ribosomes would release the genomic RNA since the same region is genomic RNA-binding and ribosome-binding. Specifically inhibits interleukin-1 receptor-associated kinase 1/IRAK1-dependent signaling during viral entry, representing a means by which the alphaviruses may evade innate immune detection and activation prior to viral gene expression. Functionally, provides the signal sequence for the translocation of the precursor of protein E3/E2 to the host endoplasmic reticulum. Furin-cleaved E3 remains associated with spike glycoprotein E1 and mediates pH protection of the latter during the transport via the secretory pathway. After virion release from the host cell, the assembly protein E3 is gradually released in the extracellular space. Plays a role in viral attachment to target host cell, by binding to the cell receptor MXRA8. The host LDLR may also act as a cell receptor for viral entry. Synthesized as a p62 precursor which is processed by furin at the cell membrane just before virion budding, giving rise to E2-E1 heterodimer. The p62-E1 heterodimer is stable, whereas E2-E1 is unstable and dissociate at low pH. p62 is processed at the last step, presumably to avoid E1 fusion activation before its final export to cell surface. E2 C-terminus contains a transitory transmembrane that would be disrupted by palmitoylation, resulting in reorientation of the C-terminal tail from lumenal to cytoplasmic side. This step is critical since E2 C-terminus is involved in budding by interacting with capsid proteins. This release of E2 C-terminus in cytoplasm occurs lately in protein export, and precludes premature assembly of particles at the endoplasmic reticulum membrane. In terms of biological role, acts as a viroporin that participates in virus glycoprotein processing and transport to the plasma membrane, cell permeabilization and budding of viral particles. The cation channel is permeable to Na(+)&gt;K(+)&gt;Ca(2+) in vitro. Disrupts the calcium homeostasis of the cell, probably at the endoplasmic reticulum level. This leads to cytoplasmic calcium elevation. Because of its lipophilic properties, the 6K protein is postulated to influence the selection of lipids that interact with the transmembrane domains of the glycoproteins, which, in turn, affects the deformability of the bilayer required for the extreme curvature that occurs as budding proceeds. Present in low amount in virions, about 3% compared to viral glycoproteins. Its function is as follows. Class II viral fusion protein. Fusion activity is inactive as long as E1 is bound to E2 in mature virion. After virus attachment to target cell via host MXRA8 and endocytosis, acidification of the endosome induce dissociation of E1/E2 heterodimer and concomitant trimerization of the E1 subunits. This E1 trimer is fusion active, and promotes release of viral nucleocapsid in cytoplasm after endosome and viral membrane fusion. Efficient fusion requires the presence of cholesterol and sphingolipid in the target membrane. The protein is Structural polyprotein of Aedes (Common banded mosquito).